The sequence spans 399 residues: Zinc metalloproteinase nas-25 (399 aa).

An N-terminal signal peptide occupies residues 1 to 20 (MQIYLGITICLVAFLTVIDC). The Peptidase M12A domain occupies 41-237 (QVQRDLTYRW…DQINQYYQCY (197 aa)). Asn-52 and Asn-61 each carry an N-linked (GlcNAc...) asparagine glycan. 4 cysteine pairs are disulfide-bonded: Cys-82–Cys-236, Cys-106–Cys-126, Cys-240–Cys-260, and Cys-265–Cys-274. His-134 serves as a coordination point for Zn(2+). Residue Glu-135 is part of the active site. Zn(2+) is bound by residues His-138 and His-144. In terms of domain architecture, EGF-like spans 232–275 (QYYQCYDSCRNAGQLANCANGGIPNPNNCQVCNCPMGYGGDLCD). The N-linked (GlcNAc...) asparagine glycan is linked to Asn-371.

Zn(2+) serves as cofactor. In terms of tissue distribution, expressed in pharyngeal muscles, pharyngeal-intestinal valve, rectal gland cells and arcade cells.

Its subcellular location is the secreted. Functionally, metalloprotease. In Caenorhabditis elegans, this protein is Zinc metalloproteinase nas-25 (nas-25).